A 127-amino-acid polypeptide reads, in one-letter code: Protein chibby homolog 1 (127 aa).

A disordered region spans residues 1–25; the sequence is MPLFGSIFSPKKTPPRKSASLSNLH. 2 positions are modified to phosphoserine: S9 and S20. The tract at residues 60–112 is minimal region for the interaction with PKD2; sequence VADSVISGGVDRRETQRLRKRNQQLEEENNLLRLKVDILLDMLSETTAESHLK. Positions 68–110 form a coiled coil; that stretch reads GVDRRETQRLRKRNQQLEEENNLLRLKVDILLDMLSETTAESH. Residues 77-98 are leucine-zipper; mediates homodimerization; that stretch reads LRKRNQQLEEENNLLRLKVDIL.

This sequence belongs to the chibby family. As to quaternary structure, homodimer. Homodimerization is essential for nuclear localization and interaction with KPNA4 but is dispensable for interaction with CTNNB1. Interacts with polycystin-2/PKD2 and GM130. Interacts with the C-terminal region of CTNNB1. Interacts (C-terminus) with TCIM (C-terminus), TCIM competes with CTNNB1 for the interaction with CBY1. Interacts with FAM92A; this interaction facilitates targeting of FAM92A to cilium basal body. Interacts with CIBAR2. Interacts with KPNA4.

The protein localises to the nucleus speckle. It is found in the cytoplasm. The protein resides in the cytoskeleton. Its subcellular location is the cilium basal body. It localises to the microtubule organizing center. The protein localises to the centrosome. It is found in the centriole. The protein resides in the golgi apparatus. Its subcellular location is the trans-Golgi network. It localises to the cell projection. The protein localises to the cilium. It is found in the flagellum. The protein resides in the nucleus. Functionally, inhibits the Wnt/Wingless pathway by binding to CTNNB1/beta-catenin and inhibiting beta-catenin-mediated transcriptional activation through competition with TCF/LEF transcription factors. Has also been shown to play a role in regulating the intracellular trafficking of polycystin-2/PKD2 and possibly of other intracellular proteins. Promotes adipocyte and cardiomyocyte differentiation. In Rattus norvegicus (Rat), this protein is Protein chibby homolog 1 (Cby1).